Here is a 451-residue protein sequence, read N- to C-terminus: Alpha-galactosidase (451 aa).

Residue 5–71 (PKITFIGAGS…ASGRITCHTN (67 aa)) participates in NAD(+) binding. Residue Asn-151 coordinates substrate. Cys-173 provides a ligand contact to Mn(2+). The active-site Proton donor is the His-174. His-203 contacts Mn(2+). Arg-287 lines the substrate pocket.

The protein belongs to the glycosyl hydrolase 4 family. In terms of assembly, homodimer. Requires Mn(2+) as cofactor. NAD(+) is required as a cofactor.

It catalyses the reaction Hydrolysis of terminal, non-reducing alpha-D-galactose residues in alpha-D-galactosides, including galactose oligosaccharides, galactomannans and galactolipids.. This Salmonella typhimurium (strain LT2 / SGSC1412 / ATCC 700720) protein is Alpha-galactosidase (melA).